A 341-amino-acid polypeptide reads, in one-letter code: NADH-quinone oxidoreductase subunit H (341 aa).

Helical transmembrane passes span 16 to 36 (LLIIVLQIVAIVLPLLIAVAY), 86 to 106 (VVFVGAPMLTFFLALVAWAVI), 119 to 139 (VGVLYLFAISSLGVYGIIMAG), 165 to 185 (IGFILISVLLTVGSLNLSDVV), 191 to 211 (MWFIVPHFPLFILFIISGLAE), 254 to 274 (GAMTSILFLGGWMAPFGLGWL), 276 to 296 (IPGLIWFVLKICLVMFVFLWV), and 315 to 335 (VFLPFSLFWLVLTASVLTAFG).

Belongs to the complex I subunit 1 family. In terms of assembly, NDH-1 is composed of 14 different subunits. Subunits NuoA, H, J, K, L, M, N constitute the membrane sector of the complex.

Its subcellular location is the cell inner membrane. The catalysed reaction is a quinone + NADH + 5 H(+)(in) = a quinol + NAD(+) + 4 H(+)(out). In terms of biological role, NDH-1 shuttles electrons from NADH, via FMN and iron-sulfur (Fe-S) centers, to quinones in the respiratory chain. The immediate electron acceptor for the enzyme in this species is believed to be ubiquinone. Couples the redox reaction to proton translocation (for every two electrons transferred, four hydrogen ions are translocated across the cytoplasmic membrane), and thus conserves the redox energy in a proton gradient. This subunit may bind ubiquinone. This Paramagnetospirillum magneticum (strain ATCC 700264 / AMB-1) (Magnetospirillum magneticum) protein is NADH-quinone oxidoreductase subunit H.